Consider the following 248-residue polypeptide: MWLGVITLFPEMFRAVTDFGVTGRAVKNGLLELHTWNPRDFTHDRHSTVDDRPYGGGPGMLMMVQPLRDAIHAARAAAGEDAKVIYLSPQGRKLDQQGVTELAKSSRLILVCGRYEGIDERIIQTEVDEEWSVGDYVLSGGELPAMTMIDAVSRLVPGVLGKQASAEQDSFSDGLLDCPHYTRPESLDGLDVPAVLLSGNHEQIRLWRLQQSLGRTLLRRPELLQNLALTDEQSTLLAQFVEAMDKNA.

Residues Gly-113 and 133-138 each bind S-adenosyl-L-methionine; that span reads VGDYVL.

Belongs to the RNA methyltransferase TrmD family. As to quaternary structure, homodimer.

The protein resides in the cytoplasm. It carries out the reaction guanosine(37) in tRNA + S-adenosyl-L-methionine = N(1)-methylguanosine(37) in tRNA + S-adenosyl-L-homocysteine + H(+). Specifically methylates guanosine-37 in various tRNAs. This chain is tRNA (guanine-N(1)-)-methyltransferase, found in Shewanella oneidensis (strain ATCC 700550 / JCM 31522 / CIP 106686 / LMG 19005 / NCIMB 14063 / MR-1).